Here is a 172-residue protein sequence, read N- to C-terminus: MANSQKVIDVSNAHYNLNLELGSVYAQYAHIADDQFSMPFLAKFINDLSNDKLGVHKDLISEYARKIEIPLHTKFSVDVSFKPTDPKELVKHILETEQKVRKHVANMAKVCLEEGDFETFSFVKWFVDDGIKDFDDVRTIHDFFENGNNNLQVEYAIRQIFKANEAWGRKII.

Residues 1 to 148 (MANSQKVIDV…TIHDFFENGN (148 aa)) enclose the Ferritin-like diiron domain.

This is an uncharacterized protein from Ureaplasma urealyticum (Ureaplasma urealyticum biotype 2).